Here is a 237-residue protein sequence, read N- to C-terminus: rRNA-processing protein EFG1 (237 aa).

Positions 1–24 are disordered; that stretch reads MPKTVKNPKNNKSRSRGAPIQVAE. 2 coiled-coil regions span residues 53–113 and 166–186; these read DKKI…ISQT and LKIT…LMEE. The segment at 206–237 is disordered; that stretch reads NDKTQKAVLTEEIDAPEQKQDEQQEEQDDFFE. The span at 228–237 shows a compositional bias: acidic residues; it reads QQEEQDDFFE.

Belongs to the EFG1 family.

The protein localises to the nucleus. It is found in the nucleolus. Its function is as follows. Involved in rRNA processing. The protein is rRNA-processing protein EFG1 of Candida albicans (strain SC5314 / ATCC MYA-2876) (Yeast).